A 478-amino-acid polypeptide reads, in one-letter code: Proline--tRNA ligase (478 aa).

This sequence belongs to the class-II aminoacyl-tRNA synthetase family. ProS type 3 subfamily. Homodimer.

It localises to the cytoplasm. The enzyme catalyses tRNA(Pro) + L-proline + ATP = L-prolyl-tRNA(Pro) + AMP + diphosphate. Functionally, catalyzes the attachment of proline to tRNA(Pro) in a two-step reaction: proline is first activated by ATP to form Pro-AMP and then transferred to the acceptor end of tRNA(Pro). The polypeptide is Proline--tRNA ligase (Methanococcoides burtonii (strain DSM 6242 / NBRC 107633 / OCM 468 / ACE-M)).